Consider the following 215-residue polypeptide: Adenylate kinase (215 aa).

10-15 (GAGKGT) contacts ATP. The interval 30–59 (STGDMFRAAMKNNTELGKKAKSFMDNGDLV) is NMP. Residues T31, R36, 57–59 (DLV), 85–88 (GFPR), and Q92 each bind AMP. Residues 126 to 163 (GRWICRTCGKTYHEIYNPPKVPGKCDLDGGELYQRDDD) are LID. R127 serves as a coordination point for ATP. Zn(2+) is bound by residues C130 and C133. 136–137 (TY) serves as a coordination point for ATP. Zn(2+) contacts are provided by C150 and D153. Positions 160 and 171 each coordinate AMP. Q199 lines the ATP pocket.

The protein belongs to the adenylate kinase family. In terms of assembly, monomer.

It localises to the cytoplasm. It carries out the reaction AMP + ATP = 2 ADP. Its pathway is purine metabolism; AMP biosynthesis via salvage pathway; AMP from ADP: step 1/1. In terms of biological role, catalyzes the reversible transfer of the terminal phosphate group between ATP and AMP. Plays an important role in cellular energy homeostasis and in adenine nucleotide metabolism. This Listeria monocytogenes serotype 4b (strain CLIP80459) protein is Adenylate kinase.